A 262-amino-acid polypeptide reads, in one-letter code: Protein Pcal_0062 (262 aa).

The protein belongs to the CinA family.

In Pyrobaculum calidifontis (strain DSM 21063 / JCM 11548 / VA1), this protein is Protein Pcal_0062.